The following is a 310-amino-acid chain: Adenylyl-sulfate kinase 4, chloroplastic (310 aa).

The transit peptide at 1–75 (MDVAAMARCV…MAKDESISSR (75 aa)) directs the protein to the chloroplast. 116 to 124 (GLSGSGKSS) lines the ATP pocket. Residues Asp146, Arg149, Arg163, Asn166, 189 to 190 (IS), and Gly239 contribute to the substrate site. The active-site Phosphoserine intermediate is Ser190.

Belongs to the APS kinase family. As to quaternary structure, homodimer; disulfide-linked. As to expression, expressed in root vasculature, root tips, leaf epidermal and guard cells, pollen grains and radicle of immature seeds.

It localises to the plastid. It is found in the chloroplast. It catalyses the reaction adenosine 5'-phosphosulfate + ATP = 3'-phosphoadenylyl sulfate + ADP + H(+). The protein operates within sulfur metabolism; hydrogen sulfide biosynthesis; sulfite from sulfate: step 2/3. Catalyzes the phosphorylation of adenosine 5'-phosphosulfate to 3'-phosphoadenylyl sulfate, which is the activated sulfate form for sulfation reactions. Essential for plant reproduction and viability. The protein is Adenylyl-sulfate kinase 4, chloroplastic (APK4) of Arabidopsis thaliana (Mouse-ear cress).